Consider the following 119-residue polypeptide: Large ribosomal subunit protein uL18 (119 aa).

This sequence belongs to the universal ribosomal protein uL18 family. Part of the 50S ribosomal subunit; part of the 5S rRNA/L5/L18/L25 subcomplex. Contacts the 5S and 23S rRNAs.

This is one of the proteins that bind and probably mediate the attachment of the 5S RNA into the large ribosomal subunit, where it forms part of the central protuberance. This Endomicrobium trichonymphae protein is Large ribosomal subunit protein uL18.